Consider the following 262-residue polypeptide: Tryptophan synthase alpha chain (262 aa).

Active-site proton acceptor residues include Glu-49 and Asp-60.

This sequence belongs to the TrpA family. As to quaternary structure, tetramer of two alpha and two beta chains.

The enzyme catalyses (1S,2R)-1-C-(indol-3-yl)glycerol 3-phosphate + L-serine = D-glyceraldehyde 3-phosphate + L-tryptophan + H2O. Its pathway is amino-acid biosynthesis; L-tryptophan biosynthesis; L-tryptophan from chorismate: step 5/5. Functionally, the alpha subunit is responsible for the aldol cleavage of indoleglycerol phosphate to indole and glyceraldehyde 3-phosphate. The polypeptide is Tryptophan synthase alpha chain (Thermoanaerobacter pseudethanolicus (strain ATCC 33223 / 39E) (Clostridium thermohydrosulfuricum)).